The sequence spans 107 residues: Iron-binding protein IscA (107 aa).

Residues Cys35, Cys99, and Cys101 each contribute to the Fe cation site.

Belongs to the HesB/IscA family. As to quaternary structure, homodimer; may form tetramers and higher multimers. It depends on Fe cation as a cofactor.

Is able to transfer iron-sulfur clusters to apo-ferredoxin. Multiple cycles of [2Fe2S] cluster formation and transfer are observed, suggesting that IscA acts catalytically. Recruits intracellular free iron so as to provide iron for the assembly of transient iron-sulfur cluster in IscU in the presence of IscS, L-cysteine and the thioredoxin reductase system TrxA/TrxB. The chain is Iron-binding protein IscA from Yersinia pestis bv. Antiqua (strain Angola).